Here is a 130-residue protein sequence, read N- to C-terminus: MATRVVATATVRAVKGRKLIPTRAALTLTPAAVLRIKTLLQDKPDMVGLKVGVRQRGCNGLSYTLDYASQKDKLDEEVVQDGVKVFIDKKAQLSLLGTEMDFVESKLSSEFVFNNPNIKGTCGCGESFSM.

Residues 1-24 (MATRVVATATVRAVKGRKLIPTRA) constitute a mitochondrion transit peptide. Residues Cys58, Cys122, and Cys124 each contribute to the Fe cation site.

Belongs to the HesB/IscA family. In terms of assembly, interacts with cry. In terms of tissue distribution, detected in head.

It is found in the mitochondrion. Involved in the assembly of mitochondrial iron-sulfur proteins. Probably involved in the binding of an intermediate of Fe/S cluster assembly. Required for maintenance of circadian rhythms under constant darkness. In Drosophila melanogaster (Fruit fly), this protein is Iron-sulfur cluster assembly 1 homolog, mitochondrial.